A 462-amino-acid polypeptide reads, in one-letter code: L-seryl-tRNA(Sec) selenium transferase (462 aa).

K293 bears the N6-(pyridoxal phosphate)lysine mark.

This sequence belongs to the SelA family. It depends on pyridoxal 5'-phosphate as a cofactor.

The protein localises to the cytoplasm. It carries out the reaction L-seryl-tRNA(Sec) + selenophosphate + H(+) = L-selenocysteinyl-tRNA(Sec) + phosphate. It participates in aminoacyl-tRNA biosynthesis; selenocysteinyl-tRNA(Sec) biosynthesis; selenocysteinyl-tRNA(Sec) from L-seryl-tRNA(Sec) (bacterial route): step 1/1. Converts seryl-tRNA(Sec) to selenocysteinyl-tRNA(Sec) required for selenoprotein biosynthesis. The polypeptide is L-seryl-tRNA(Sec) selenium transferase (Clostridium botulinum (strain Loch Maree / Type A3)).